Here is a 169-residue protein sequence, read N- to C-terminus: Eukaryotic translation initiation factor 5A-2 (169 aa).

K64 carries the hypusine modification.

It belongs to the eIF-5A family. In terms of processing, lys-51 undergoes hypusination, a unique post-translational modification that consists in the addition of a butylamino group from spermidine to lysine side chain, leading to the formation of the unusual amino acid hypusine. eIF-5As are the only known proteins to undergo this modification, which is essential for their function.

It localises to the cytoplasm. The protein resides in the nucleus. Its function is as follows. Translation factor that promotes translation elongation and termination, particularly upon ribosome stalling at specific amino acid sequence contexts. Binds between the exit (E) and peptidyl (P) site of the ribosome and promotes rescue of stalled ribosome: specifically required for efficient translation of polyproline-containing peptides as well as other motifs that stall the ribosome. Acts as a ribosome quality control (RQC) cofactor by joining the RQC complex to facilitate peptidyl transfer during CAT tailing step. In Schizosaccharomyces pombe (strain 972 / ATCC 24843) (Fission yeast), this protein is Eukaryotic translation initiation factor 5A-2 (tif51b).